We begin with the raw amino-acid sequence, 255 residues long: Aliphatic sulfonates import ATP-binding protein SsuB (255 aa).

Positions 12–233 (LLLNAVSKHY…RLGSVRLAEL (222 aa)) constitute an ABC transporter domain. 44–51 (GRSGGGKS) is a binding site for ATP.

This sequence belongs to the ABC transporter superfamily. Aliphatic sulfonates importer (TC 3.A.1.17.2) family. In terms of assembly, the complex is composed of two ATP-binding proteins (SsuB), two transmembrane proteins (SsuC) and a solute-binding protein (SsuA).

It is found in the cell inner membrane. The catalysed reaction is ATP + H2O + aliphatic sulfonate-[sulfonate-binding protein]Side 1 = ADP + phosphate + aliphatic sulfonateSide 2 + [sulfonate-binding protein]Side 1.. Part of the ABC transporter complex SsuABC involved in aliphatic sulfonates import. Responsible for energy coupling to the transport system. The polypeptide is Aliphatic sulfonates import ATP-binding protein SsuB (Escherichia coli O6:H1 (strain CFT073 / ATCC 700928 / UPEC)).